The primary structure comprises 101 residues: MEPVDPSLDPWNHPGSQPTTPCTKCYCKRCCFHCQWCFTTKGLGISYGRKKRRQRHRTPQSSQVHQNSLPKQPLSQARGDPTGPKESKKEVESKAKTDPCA.

Positions Met-1–Lys-24 are interaction with human CREBBP. Residues Met-1 to Gly-48 are transactivation. Residues Cys-22, Cys-25, and Cys-27 each coordinate Zn(2+). The tract at residues Cys-22–Cys-37 is cysteine-rich. Residue Lys-28 is modified to N6-acetyllysine; by host PCAF. Zn(2+) contacts are provided by Cys-30, His-33, Cys-34, and Cys-37. Positions Phe-38 to Gly-48 are core. Basic residues predominate over residues Gly-48 to Thr-58. Positions Gly-48 to Ala-101 are disordered. Positions Arg-49–Arg-57 match the Nuclear localization signal, RNA-binding (TAR), and protein transduction motif. The segment at Arg-49–Glu-86 is interaction with the host capping enzyme RNGTT. An N6-acetyllysine; by host EP300 and GCN5L2 mark is found at Lys-50 and Lys-51. Asymmetric dimethylarginine; by host PRMT6 occurs at positions 52 and 53. Residues Pro-59–Ser-75 show a composition bias toward polar residues. Lys-71 is covalently cross-linked (Glycyl lysine isopeptide (Lys-Gly) (interchain with G-Cter in ubiquitin)). The short motif at Arg-78–Asp-80 is the Cell attachment site element. Residues Gly-83 to Ala-101 show a composition bias toward basic and acidic residues.

It belongs to the lentiviruses Tat family. In terms of assembly, interacts with host CCNT1. Associates with the P-TEFb complex composed at least of Tat, P-TEFb (CDK9 and CCNT1), TAR RNA, RNA Pol II. Recruits the HATs CREBBP, TAF1/TFIID, EP300, PCAF and GCN5L2. Interacts with host KAT5/Tip60; this interaction targets the latter to degradation. Interacts with the host deacetylase SIRT1. Interacts with host capping enzyme RNGTT; this interaction stimulates RNGTT. Binds to host KDR, and to the host integrins ITGAV/ITGB3 and ITGA5/ITGB1. Interacts with host KPNB1/importin beta-1 without previous binding to KPNA1/importin alpha-1. Interacts with EIF2AK2. Interacts with host nucleosome assembly protein NAP1L1; this interaction may be required for the transport of Tat within the nucleus, since the two proteins interact at the nuclear rim. Interacts with host C1QBP/SF2P32; this interaction involves lysine-acetylated Tat. Interacts with the host chemokine receptors CCR2, CCR3 and CXCR4. Interacts with host DPP4/CD26; this interaction may trigger an anti-proliferative effect. Interacts with host LDLR. Interacts with the host extracellular matrix metalloproteinase MMP1. Interacts with host PRMT6; this interaction mediates Tat's methylation. Interacts with, and is ubiquitinated by MDM2/Hdm2. Interacts with host PSMC3 and HTATIP2. Interacts with STAB1; this interaction may overcome SATB1-mediated repression of IL2 and IL2RA (interleukin) in T cells by binding to the same domain than HDAC1. Interacts (when acetylated) with human CDK13, thereby increasing HIV-1 mRNA splicing and promoting the production of the doubly spliced HIV-1 protein Nef. Interacts with host TBP; this interaction modulates the activity of transcriptional pre-initiation complex. Interacts with host RELA. Interacts with host PLSCR1; this interaction negatively regulates Tat transactivation activity by altering its subcellular distribution. Asymmetrical arginine methylation by host PRMT6 seems to diminish the transactivation capacity of Tat and affects the interaction with host CCNT1. In terms of processing, acetylation by EP300, CREBBP, GCN5L2/GCN5 and PCAF regulates the transactivation activity of Tat. EP300-mediated acetylation of Lys-50 promotes dissociation of Tat from the TAR RNA through the competitive binding to PCAF's bromodomain. In addition, the non-acetylated Tat's N-terminus can also interact with PCAF. PCAF-mediated acetylation of Lys-28 enhances Tat's binding to CCNT1. Lys-50 is deacetylated by SIRT1. Post-translationally, polyubiquitination by host MDM2 does not target Tat to degradation, but activates its transactivation function and fosters interaction with CCNT1 and TAR RNA. Phosphorylated by EIF2AK2 on serine and threonine residues adjacent to the basic region important for TAR RNA binding and function. Phosphorylation of Tat by EIF2AK2 is dependent on the prior activation of EIF2AK2 by dsRNA.

Its subcellular location is the host nucleus. It is found in the host nucleolus. The protein localises to the host cytoplasm. It localises to the secreted. Transcriptional activator that increases RNA Pol II processivity, thereby increasing the level of full-length viral transcripts. Recognizes a hairpin structure at the 5'-LTR of the nascent viral mRNAs referred to as the transactivation responsive RNA element (TAR) and recruits the cyclin T1-CDK9 complex (P-TEFb complex) that will in turn hyperphosphorylate the RNA polymerase II to allow efficient elongation. The CDK9 component of P-TEFb and other Tat-activated kinases hyperphosphorylate the C-terminus of RNA Pol II that becomes stabilized and much more processive. Other factors such as HTATSF1/Tat-SF1, SUPT5H/SPT5, and HTATIP2 are also important for Tat's function. Besides its effect on RNA Pol II processivity, Tat induces chromatin remodeling of proviral genes by recruiting the histone acetyltransferases (HATs) CREBBP, EP300 and PCAF to the chromatin. This also contributes to the increase in proviral transcription rate, especially when the provirus integrates in transcriptionally silent region of the host genome. To ensure maximal activation of the LTR, Tat mediates nuclear translocation of NF-kappa-B by interacting with host RELA. Through its interaction with host TBP, Tat may also modulate transcription initiation. Tat can reactivate a latently infected cell by penetrating in it and transactivating its LTR promoter. In the cytoplasm, Tat is thought to act as a translational activator of HIV-1 mRNAs. Functionally, extracellular circulating Tat can be endocytosed by surrounding uninfected cells via the binding to several surface receptors such as CD26, CXCR4, heparan sulfate proteoglycans (HSPG) or LDLR. Neurons are rarely infected, but they internalize Tat via their LDLR. Through its interaction with nuclear HATs, Tat is potentially able to control the acetylation-dependent cellular gene expression. Modulates the expression of many cellular genes involved in cell survival, proliferation or in coding for cytokines or cytokine receptors. Tat plays a role in T-cell and neurons apoptosis. Tat induced neurotoxicity and apoptosis probably contribute to neuroAIDS. Circulating Tat also acts as a chemokine-like and/or growth factor-like molecule that binds to specific receptors on the surface of the cells, affecting many cellular pathways. In the vascular system, Tat binds to ITGAV/ITGB3 and ITGA5/ITGB1 integrins dimers at the surface of endothelial cells and competes with bFGF for heparin-binding sites, leading to an excess of soluble bFGF. This chain is Protein Tat, found in Human immunodeficiency virus type 1 group M subtype F1 (isolate VI850) (HIV-1).